Consider the following 921-residue polypeptide: Eukaryotic translation initiation factor 3 subunit A (921 aa).

The PCI domain occupies 319–493 (FKFYASQLVL…GVVSFMEDPF (175 aa)). The disordered stretch occupies residues 497 to 524 (GGSTATNADDEQRNDDGYEETHVEEEPE). The span at 506-517 (DEQRNDDGYEET) shows a compositional bias: basic and acidic residues. 2 coiled-coil regions span residues 562 to 647 (ARNE…NEKT) and 693 to 868 (ERMS…IKRN). Positions 818–865 (AAKEHDDRQRMLQDRLTKERKERERVNKEKDEAARKQREIEEAVERTI) are enriched in basic and acidic residues. Positions 818–921 (AAKEHDDRQR…KMKLRRAGRA (104 aa)) are disordered. Residues 873–890 (PAPPVRSAPPARAAPPPR) show a composition bias toward pro residues. The segment covering 903 to 913 (PEKKLTYAEKM) has biased composition (basic and acidic residues).

This sequence belongs to the eIF-3 subunit A family. In terms of assembly, component of the eukaryotic translation initiation factor 3 (eIF-3) complex.

The protein resides in the cytoplasm. Functionally, RNA-binding component of the eukaryotic translation initiation factor 3 (eIF-3) complex, which is involved in protein synthesis of a specialized repertoire of mRNAs and, together with other initiation factors, stimulates binding of mRNA and methionyl-tRNAi to the 40S ribosome. The eIF-3 complex specifically targets and initiates translation of a subset of mRNAs involved in cell proliferation. This chain is Eukaryotic translation initiation factor 3 subunit A, found in Eremothecium gossypii (strain ATCC 10895 / CBS 109.51 / FGSC 9923 / NRRL Y-1056) (Yeast).